A 156-amino-acid polypeptide reads, in one-letter code: ATP synthase subunit b (156 aa).

A helical transmembrane segment spans residues 7–29; it reads LLGQAISFLLFVWFCMKFVWPPL.

This sequence belongs to the ATPase B chain family. As to quaternary structure, F-type ATPases have 2 components, F(1) - the catalytic core - and F(0) - the membrane proton channel. F(1) has five subunits: alpha(3), beta(3), gamma(1), delta(1), epsilon(1). F(0) has three main subunits: a(1), b(2) and c(10-14). The alpha and beta chains form an alternating ring which encloses part of the gamma chain. F(1) is attached to F(0) by a central stalk formed by the gamma and epsilon chains, while a peripheral stalk is formed by the delta and b chains.

It is found in the cell inner membrane. Its function is as follows. F(1)F(0) ATP synthase produces ATP from ADP in the presence of a proton or sodium gradient. F-type ATPases consist of two structural domains, F(1) containing the extramembraneous catalytic core and F(0) containing the membrane proton channel, linked together by a central stalk and a peripheral stalk. During catalysis, ATP synthesis in the catalytic domain of F(1) is coupled via a rotary mechanism of the central stalk subunits to proton translocation. Component of the F(0) channel, it forms part of the peripheral stalk, linking F(1) to F(0). In Shewanella pealeana (strain ATCC 700345 / ANG-SQ1), this protein is ATP synthase subunit b.